Reading from the N-terminus, the 202-residue chain is FMN reductase (NADH) RutF (202 aa).

The span at 168 to 191 shows a compositional bias: low complexity; sequence PRAPRGGSAPAEPARGARAIGARP. Positions 168–202 are disordered; it reads PRAPRGGSAPAEPARGARAIGARPPEGPVLALRSA.

The protein belongs to the non-flavoprotein flavin reductase family. RutF subfamily.

It carries out the reaction FMNH2 + NAD(+) = FMN + NADH + 2 H(+). Its function is as follows. Catalyzes the reduction of FMN to FMNH2 which is used to reduce pyrimidine by RutA via the Rut pathway. The sequence is that of FMN reductase (NADH) RutF from Methylorubrum populi (strain ATCC BAA-705 / NCIMB 13946 / BJ001) (Methylobacterium populi).